We begin with the raw amino-acid sequence, 214 residues long: Cysteine-rich venom protein LEI1 (214 aa).

An N-terminal signal peptide occupies residues 1–18 (MIAFILLSLAAVLQQSFG). The SCP domain maps to 37-165 (VNMHNSLRRS…YYSYFYVCQY (129 aa)). 5 cysteine pairs are disulfide-bonded: cysteine 74–cysteine 152, cysteine 91–cysteine 166, cysteine 147–cysteine 163, cysteine 185–cysteine 192, and cysteine 188–cysteine 197. The ShKT domain maps to 201–214 (CTVENKFTNCNTLV).

This sequence belongs to the CRISP family. In terms of tissue distribution, expressed by the venom gland.

It localises to the secreted. Blocks contraction of smooth muscle elicited by high potassium-induced depolarization, but does not block caffeine-stimulated contraction. May target voltage-gated calcium channels on smooth muscle. The protein is Cysteine-rich venom protein LEI1 of Leioheterodon madagascariensis (Malagasy giant hognose snake).